Consider the following 168-residue polypeptide: Disulfide bond formation protein B 2 (168 aa).

Residues 1 to 14 (MSAPIGATRAERWT) lie on the Cytoplasmic side of the membrane. The chain crosses the membrane as a helical span at residues 15–31 (LLAIGVASFELVAGALW). Residues 32-49 (IQLAWQEDPCPLCIIQRY) lie on the Periplasmic side of the membrane. Residues Cys41 and Cys44 are joined by a disulfide bond. Residues 50–64 (LFLLIALFTFVAAAG) traverse the membrane as a helical segment. Topologically, residues 65–69 (GRRVA) are cytoplasmic. A helical membrane pass occupies residues 70 to 87 (LLRVLSLTTALAGAAVAV). Topologically, residues 88–142 (RHIYVQAHPGFSCGFDALQPVIDSLPPAHWLPPVFKVGGLCETLYPPILGLSLPM) are periplasmic. A disulfide bond links Cys100 and Cys128. A helical transmembrane segment spans residues 143–161 (WALVGFSAIAVALGWRIRA). The Cytoplasmic segment spans residues 162–168 (QAVIRTA).

It belongs to the DsbB family.

The protein resides in the cell inner membrane. Its function is as follows. Required for disulfide bond formation in some periplasmic proteins. Acts by oxidizing the DsbA protein. The sequence is that of Disulfide bond formation protein B 2 from Burkholderia lata (strain ATCC 17760 / DSM 23089 / LMG 22485 / NCIMB 9086 / R18194 / 383).